Consider the following 678-residue polypeptide: Secretin ExeD (678 aa).

A signal peptide spans 1 to 25 (MINKGKGWRLATVAAALMMAGSAWA). Positions 26–122 (TEYSASFKNA…VVDETNPGIG (97 aa)) are N0. Residues 124–188 (EMVTRVVPVR…EVVRRVDKAG (65 aa)) are N1. The N2 stretch occupies residues 189–264 (DQEVDIIKLK…MVRQLDRDLQ (76 aa)). The interval 267–348 (GNTRVFYLKY…ELEQVVAKLD (82 aa)) is N3. Positions 353–602 (QVLVEAIIVE…VFIRPTILRD (250 aa)) are secretin. The segment at 604–678 (NVYSGISSNK…GVQPFVQGNK (75 aa)) is s domain.

It belongs to the bacterial secretin family. GSP D subfamily. As to quaternary structure, forms a cylindrical channel with 15 subunits.

It localises to the cell outer membrane. Functionally, involved in a type II secretion system (T2SS, formerly general secretion pathway, GSP) for the export of proteins. This subunit forms the outer membrane channel. The protein is Secretin ExeD (exeD) of Aeromonas hydrophila.